The sequence spans 228 residues: Probable C4-dicarboxylate response regulator DctR (228 aa).

Positions 7-123 (TVLLIEDDPM…RMKQALEQYR (117 aa)) constitute a Response regulatory domain. Residue Asp-58 is modified to 4-aspartylphosphate. Residues 180-199 (AEEVADGVGIARVTARRYLE) constitute a DNA-binding region (H-T-H motif).

Phosphorylated by DctS.

It localises to the cytoplasm. Member of the two-component regulatory system DctS/DctR. Essential for expression of DctP. This is Probable C4-dicarboxylate response regulator DctR (dctR) from Priestia megaterium (Bacillus megaterium).